We begin with the raw amino-acid sequence, 289 residues long: G1/S-specific cyclin-D2 (289 aa).

A Cyclin N-terminal domain is found at 26-151 (VLQNLLTIEE…VVLGKLKWNL (126 aa)). The tract at residues 264-289 (DQGDGSKSEDELDQASTPTDVRDIDL) is disordered. S271 is subject to Phosphoserine. T280 is subject to Phosphothreonine.

Belongs to the cyclin family. Cyclin D subfamily. As to quaternary structure, interacts with either CDK4 or CDK6 protein kinase to form a serine/threonine kinase holoenzyme complex. The cyclin subunit imparts substrate specificity to the complex. Post-translationally, phosphorylation at Thr-280 by MAP kinases is required for ubiquitination and degradation by the DCX(AMBRA1) complex. In terms of processing, ubiquitinated by the DCX(AMBRA1) complex during the transition from G1 to S cell phase, leading to its degradation: ubiquitination is dependent on Thr-280 phosphorylation. The DCX(AMBRA1) complex represents the major regulator of CCND2 stability during the G1/S transition. Polyubiquitinated by the SCF(FBXL2) complex, leading to proteasomal degradation.

It is found in the nucleus. Its subcellular location is the cytoplasm. It localises to the nucleus membrane. Regulatory component of the cyclin D2-CDK4 (DC) complex that phosphorylates and inhibits members of the retinoblastoma (RB) protein family including RB1 and regulates the cell-cycle during G(1)/S transition. Phosphorylation of RB1 allows dissociation of the transcription factor E2F from the RB/E2F complex and the subsequent transcription of E2F target genes which are responsible for the progression through the G(1) phase. Hypophosphorylates RB1 in early G(1) phase. Cyclin D-CDK4 complexes are major integrators of various mitogenenic and antimitogenic signals. This chain is G1/S-specific cyclin-D2 (CCND2), found in Bos taurus (Bovine).